The following is a 201-amino-acid chain: Small ribosomal subunit protein uS4c (201 aa).

Residues 15–44 (LGALPGLTSKRPKTGNDLKNQSRSGKKSQY) are disordered. The S4 RNA-binding domain occupies 89-150 (MRLDNILFRL…EKKSRTLIQN (62 aa)).

Belongs to the universal ribosomal protein uS4 family. Part of the 30S ribosomal subunit. Contacts protein S5. The interaction surface between S4 and S5 is involved in control of translational fidelity.

Its subcellular location is the plastid. It localises to the chloroplast. Its function is as follows. One of the primary rRNA binding proteins, it binds directly to 16S rRNA where it nucleates assembly of the body of the 30S subunit. With S5 and S12 plays an important role in translational accuracy. The protein is Small ribosomal subunit protein uS4c (rps4) of Cucumis sativus (Cucumber).